The sequence spans 160 residues: 6,7-dimethyl-8-ribityllumazine synthase (160 aa).

5-amino-6-(D-ribitylamino)uracil contacts are provided by residues Trp28, 59 to 61 (ALE), and 81 to 83 (CVI). 86 to 87 (ET) provides a ligand contact to (2S)-2-hydroxy-3-oxobutyl phosphate. His89 functions as the Proton donor in the catalytic mechanism. Asn114 is a 5-amino-6-(D-ribitylamino)uracil binding site. Arg128 lines the (2S)-2-hydroxy-3-oxobutyl phosphate pocket.

It belongs to the DMRL synthase family.

It catalyses the reaction (2S)-2-hydroxy-3-oxobutyl phosphate + 5-amino-6-(D-ribitylamino)uracil = 6,7-dimethyl-8-(1-D-ribityl)lumazine + phosphate + 2 H2O + H(+). It participates in cofactor biosynthesis; riboflavin biosynthesis; riboflavin from 2-hydroxy-3-oxobutyl phosphate and 5-amino-6-(D-ribitylamino)uracil: step 1/2. Functionally, catalyzes the formation of 6,7-dimethyl-8-ribityllumazine by condensation of 5-amino-6-(D-ribitylamino)uracil with 3,4-dihydroxy-2-butanone 4-phosphate. This is the penultimate step in the biosynthesis of riboflavin. The polypeptide is 6,7-dimethyl-8-ribityllumazine synthase (Corynebacterium jeikeium (strain K411)).